Consider the following 242-residue polypeptide: Phosphoribosylaminoimidazole-succinocarboxamide synthase (242 aa).

It belongs to the SAICAR synthetase family.

The enzyme catalyses 5-amino-1-(5-phospho-D-ribosyl)imidazole-4-carboxylate + L-aspartate + ATP = (2S)-2-[5-amino-1-(5-phospho-beta-D-ribosyl)imidazole-4-carboxamido]succinate + ADP + phosphate + 2 H(+). The protein operates within purine metabolism; IMP biosynthesis via de novo pathway; 5-amino-1-(5-phospho-D-ribosyl)imidazole-4-carboxamide from 5-amino-1-(5-phospho-D-ribosyl)imidazole-4-carboxylate: step 1/2. This chain is Phosphoribosylaminoimidazole-succinocarboxamide synthase, found in Magnetococcus marinus (strain ATCC BAA-1437 / JCM 17883 / MC-1).